Reading from the N-terminus, the 355-residue chain is tRNA N6-adenosine threonylcarbamoyltransferase (355 aa).

Positions 111 and 115 each coordinate Fe cation. Residues 134-138, Asp167, Gly180, Asp184, and Asn279 each bind substrate; that span reads LVSGG. Asp307 contributes to the Fe cation binding site.

It belongs to the KAE1 / TsaD family. Requires Fe(2+) as cofactor.

The protein resides in the cytoplasm. It carries out the reaction L-threonylcarbamoyladenylate + adenosine(37) in tRNA = N(6)-L-threonylcarbamoyladenosine(37) in tRNA + AMP + H(+). In terms of biological role, required for the formation of a threonylcarbamoyl group on adenosine at position 37 (t(6)A37) in tRNAs that read codons beginning with adenine. Is involved in the transfer of the threonylcarbamoyl moiety of threonylcarbamoyl-AMP (TC-AMP) to the N6 group of A37, together with TsaE and TsaB. TsaD likely plays a direct catalytic role in this reaction. The protein is tRNA N6-adenosine threonylcarbamoyltransferase of Picosynechococcus sp. (strain ATCC 27264 / PCC 7002 / PR-6) (Agmenellum quadruplicatum).